A 226-amino-acid chain; its full sequence is ATP-dependent dethiobiotin synthetase BioD (226 aa).

12–17 contacts ATP; that stretch reads GVGKTV. Residue T16 participates in Mg(2+) binding. The active site involves K37. Substrate is bound at residue T41. Residues D49, 108-111, and 169-170 contribute to the ATP site; these read EGAG and GS. Mg(2+) contacts are provided by D49 and E108.

The protein belongs to the dethiobiotin synthetase family. Homodimer. Mg(2+) is required as a cofactor.

The protein resides in the cytoplasm. The catalysed reaction is (7R,8S)-7,8-diammoniononanoate + CO2 + ATP = (4R,5S)-dethiobiotin + ADP + phosphate + 3 H(+). It functions in the pathway cofactor biosynthesis; biotin biosynthesis; biotin from 7,8-diaminononanoate: step 1/2. Catalyzes a mechanistically unusual reaction, the ATP-dependent insertion of CO2 between the N7 and N8 nitrogen atoms of 7,8-diaminopelargonic acid (DAPA, also called 7,8-diammoniononanoate) to form a ureido ring. This is ATP-dependent dethiobiotin synthetase BioD from Mycobacterium marinum (strain ATCC BAA-535 / M).